Reading from the N-terminus, the 671-residue chain is Zinc finger and BTB domain-containing protein 16-A (671 aa).

A BTB domain is found at 34-96; the sequence is CDVVIMVDSQ…AYTATLQAKV (63 aa). Disordered stretches follow at residues 130–167 and 248–289; these read ENDT…TEES and VDES…RSSV. A compositionally biased stretch (basic and acidic residues) spans 270–279; it reads RSGEPDKNRD. Phosphothreonine is present on Thr-283. 9 consecutive C2H2-type zinc fingers follow at residues 401-423, 429-451, 458-480, 487-509, 515-537, 544-566, 572-594, 600-622, and 628-650; these read ERCN…RKLH, YGCE…LLSH, IVCD…RQIH, IFCL…MEVH, YICS…LRSH, FECE…KRIH, YECN…YRVH, FECK…LRTH, and YQCT…MKGH.

It belongs to the krueppel C2H2-type zinc-finger protein family. As to quaternary structure, interacts with btbd6a (via BTB domain). Post-translationally, polyubiquitinated, leading to its proteasomal degradation. During early stages of primary neurogenesis, expressed in the neural epithelium, with highest levels in the forebrain and midbrain. Also expressed in a posterior-to-anterior gradient in the caudal neural plate at the 3-6 somite stage.

It is found in the nucleus. Its subcellular location is the cytoplasm. It participates in protein modification; protein ubiquitination. Probable transcription factor. Probable substrate-recognition component of an E3 ubiquitin-protein ligase complex which mediates the ubiquitination and subsequent proteasomal degradation of target proteins. Inhibits neurogenesis. In Danio rerio (Zebrafish), this protein is Zinc finger and BTB domain-containing protein 16-A.